A 74-amino-acid chain; its full sequence is MGKEDVIRMEGTIIEALPNAMFRVELDNGHKVLAHVSXRMRKNFIRLVPGDRVIVELSVYDLTRGRIVYRKKPE.

Residues 1-72 (MGKEDVIRME…TRGRIVYRKK (72 aa)) enclose the S1-like domain.

This sequence belongs to the IF-1 family. Component of the 30S ribosomal translation pre-initiation complex which assembles on the 30S ribosome in the order IF-2 and IF-3, IF-1 and N-formylmethionyl-tRNA(fMet); mRNA recruitment can occur at any time during PIC assembly.

It is found in the cytoplasm. Its function is as follows. One of the essential components for the initiation of protein synthesis. Stabilizes the binding of IF-2 and IF-3 on the 30S subunit to which N-formylmethionyl-tRNA(fMet) subsequently binds. Helps modulate mRNA selection, yielding the 30S pre-initiation complex (PIC). Upon addition of the 50S ribosomal subunit IF-1, IF-2 and IF-3 are released leaving the mature 70S translation initiation complex. This chain is Translation initiation factor IF-1, found in Thermotoga maritima (strain ATCC 43589 / DSM 3109 / JCM 10099 / NBRC 100826 / MSB8).